The chain runs to 251 residues: tRNA (guanine-N(1)-)-methyltransferase (251 aa).

S-adenosyl-L-methionine contacts are provided by residues Gly-113 and 133 to 138 (MGDYVL).

This sequence belongs to the RNA methyltransferase TrmD family. In terms of assembly, homodimer.

It localises to the cytoplasm. It carries out the reaction guanosine(37) in tRNA + S-adenosyl-L-methionine = N(1)-methylguanosine(37) in tRNA + S-adenosyl-L-homocysteine + H(+). Specifically methylates guanosine-37 in various tRNAs. The chain is tRNA (guanine-N(1)-)-methyltransferase from Sodalis glossinidius (strain morsitans).